The primary structure comprises 332 residues: Glycerol-3-phosphate dehydrogenase [NAD(P)+] (332 aa).

The NADPH site is built by Trp11, Arg30, and Lys108. 3 residues coordinate sn-glycerol 3-phosphate: Lys108, Gly137, and Ser139. Position 141 (Ala141) interacts with NADPH. Residues Lys192, Asp245, Ser255, Arg256, and Asn257 each contribute to the sn-glycerol 3-phosphate site. Lys192 serves as the catalytic Proton acceptor. Position 256 (Arg256) interacts with NADPH. The NADPH site is built by Val280 and Glu282.

The protein belongs to the NAD-dependent glycerol-3-phosphate dehydrogenase family.

The protein localises to the cytoplasm. The enzyme catalyses sn-glycerol 3-phosphate + NAD(+) = dihydroxyacetone phosphate + NADH + H(+). The catalysed reaction is sn-glycerol 3-phosphate + NADP(+) = dihydroxyacetone phosphate + NADPH + H(+). It functions in the pathway membrane lipid metabolism; glycerophospholipid metabolism. Functionally, catalyzes the reduction of the glycolytic intermediate dihydroxyacetone phosphate (DHAP) to sn-glycerol 3-phosphate (G3P), the key precursor for phospholipid synthesis. In Burkholderia mallei (strain ATCC 23344), this protein is Glycerol-3-phosphate dehydrogenase [NAD(P)+].